A 335-amino-acid polypeptide reads, in one-letter code: UPF0284 protein TON_0688 (335 aa).

The protein belongs to the UPF0284 family.

The protein is UPF0284 protein TON_0688 of Thermococcus onnurineus (strain NA1).